A 156-amino-acid chain; its full sequence is 3-hydroxyacyl-[acyl-carrier-protein] dehydratase FabZ (156 aa).

His-57 is a catalytic residue.

The protein belongs to the thioester dehydratase family. FabZ subfamily.

It is found in the cytoplasm. It catalyses the reaction a (3R)-hydroxyacyl-[ACP] = a (2E)-enoyl-[ACP] + H2O. Its function is as follows. Involved in unsaturated fatty acids biosynthesis. Catalyzes the dehydration of short chain beta-hydroxyacyl-ACPs and long chain saturated and unsaturated beta-hydroxyacyl-ACPs. In Anaeromyxobacter dehalogenans (strain 2CP-C), this protein is 3-hydroxyacyl-[acyl-carrier-protein] dehydratase FabZ.